A 321-amino-acid chain; its full sequence is tRNA dimethylallyltransferase (321 aa).

25–32 (GPTASGKS) contributes to the ATP binding site. 27–32 (TASGKS) lines the substrate pocket. The segment at 50 to 53 (DSMQ) is interaction with substrate tRNA.

The protein belongs to the IPP transferase family. Monomer. Mg(2+) serves as cofactor.

It catalyses the reaction adenosine(37) in tRNA + dimethylallyl diphosphate = N(6)-dimethylallyladenosine(37) in tRNA + diphosphate. Its function is as follows. Catalyzes the transfer of a dimethylallyl group onto the adenine at position 37 in tRNAs that read codons beginning with uridine, leading to the formation of N6-(dimethylallyl)adenosine (i(6)A). In Rhodopseudomonas palustris (strain ATCC BAA-98 / CGA009), this protein is tRNA dimethylallyltransferase.